The primary structure comprises 450 residues: UDP-N-acetylmuramoylalanine--D-glutamate ligase (450 aa).

Residue 115–121 (GTNGKTT) participates in ATP binding.

It belongs to the MurCDEF family.

The protein localises to the cytoplasm. It catalyses the reaction UDP-N-acetyl-alpha-D-muramoyl-L-alanine + D-glutamate + ATP = UDP-N-acetyl-alpha-D-muramoyl-L-alanyl-D-glutamate + ADP + phosphate + H(+). Its pathway is cell wall biogenesis; peptidoglycan biosynthesis. Its function is as follows. Cell wall formation. Catalyzes the addition of glutamate to the nucleotide precursor UDP-N-acetylmuramoyl-L-alanine (UMA). This chain is UDP-N-acetylmuramoylalanine--D-glutamate ligase, found in Lachnospira eligens (strain ATCC 27750 / DSM 3376 / VPI C15-48 / C15-B4) (Eubacterium eligens).